We begin with the raw amino-acid sequence, 1069 residues long: Rab GTPase-activating protein 1 (1069 aa).

A disordered region spans residues 1–79; it reads MDDKASVGKI…DPPMDDQPGE (79 aa). Low complexity predominate over residues 7–22; the sequence is VGKISVSSDSVSTLNS. Ser-42 is subject to Phosphoserine. The PID domain maps to 142–298; that stretch reads EDSVVFSKLT…IFTFSVSLEI (157 aa). Residue Ser-360 is modified to Phosphoserine. The disordered stretch occupies residues 482 to 527; sequence ERERRKTTASPSVRLPQSGSQSSVIPSPPEDDEEEDNDEPLLSGSG. Polar residues predominate over residues 489–506; the sequence is TASPSVRLPQSGSQSSVI. Residues 510-520 are compositionally biased toward acidic residues; it reads PEDDEEEDNDE. The Rab-GAP TBC domain occupies 566 to 752; the sequence is GVPEALRGEV…HIIDLLLCEG (187 aa). Positions 798 to 1047 form a coiled coil; sequence KKLMELACNM…ALNEVQAAKK (250 aa). Thr-996 is subject to Phosphothreonine.

Interacts with RAB6A and tubulin gamma.

Its subcellular location is the cytoplasm. The protein localises to the cytosol. It localises to the cytoskeleton. The protein resides in the microtubule organizing center. It is found in the centrosome. In terms of biological role, may act as a GTPase-activating protein of RAB6A. May play a role in microtubule nucleation by centrosome. May participate in a RAB6A-mediated pathway involved in the metaphase-anaphase transition. The chain is Rab GTPase-activating protein 1 from Pongo abelii (Sumatran orangutan).